Reading from the N-terminus, the 713-residue chain is MNPIVKQFKYGQHTVTLETGAIARQATAAVMASMDDTSVFVTVVAKKDVKEGQDFFPLTVNYQERTYAAGRIPGGFFKREGRPSEGETLIARLIDRPIRPLFPEGFFNEIQIIATVVSVNPQISPDLVAMIGASAALSLSGVPFNGPIGAARVGFINDQFVLNPTMNEQKQSRLDLVVAGTDKAVLMVESEADILTEEQMLAAVVFGHQQQQIVIEAIKEFAAEAGKPRWDWTAPEANTILIEKVKSIAENRLGDAYRITEKQARYEQIDLIKADVITQVTAEDETISEGKIIDIFTALESQIVRGRILRGEPRIDGRTVDTVRALDICTGVLPRTHGSAIFTRGETQALAVATLGTERDAQIIDELTGEKTDHFLFHYNFPPYSVGETGMIGSPKRREIGHGRLAKRGVAAVMPSLSEFPYVVRVVSEITESNGSSSMASVCGASLALMDAGVPIKAAVAGIAMGLVKEEDNFVVLSDILGDEDHLGDMDFKVAGTREGVTALQMDIKIEGITAEIMQIALNQAKSARMHILGVMEQAIPAPRADISDFAPRIYTMKIDPKKIKDVIGKGGATVRSLTEETGTSIDIDDDGTVKIAAVDKNAVQEVMSRIEDITAEVEVGVVYKGKVTRLADFGAFVALVGNKEGLVHISQIAEERVEKVSDYLAIGQEVIVKVLEIDRQGRIRLTMKELAKDQTKNEENLLQSEEGSPVQE.

The Mg(2+) site is built by aspartate 485 and aspartate 491. One can recognise a KH domain in the interval proline 552–isoleucine 611. The 69-residue stretch at glycine 621–lysine 689 folds into the S1 motif domain. The interval aspartate 694–glutamate 713 is disordered. Positions asparagine 701–glutamate 713 are enriched in polar residues.

Belongs to the polyribonucleotide nucleotidyltransferase family. In terms of assembly, component of the RNA degradosome, which is a multiprotein complex involved in RNA processing and mRNA degradation. The cofactor is Mg(2+).

The protein resides in the cytoplasm. It carries out the reaction RNA(n+1) + phosphate = RNA(n) + a ribonucleoside 5'-diphosphate. Functionally, involved in mRNA degradation. Catalyzes the phosphorolysis of single-stranded polyribonucleotides processively in the 3'- to 5'-direction. This is Polyribonucleotide nucleotidyltransferase from Histophilus somni (strain 2336) (Haemophilus somnus).